Consider the following 506-residue polypeptide: ATP synthase subunit alpha (506 aa).

170–177 (GDRQTGKT) lines the ATP pocket.

Belongs to the ATPase alpha/beta chains family. As to quaternary structure, F-type ATPases have 2 components, CF(1) - the catalytic core - and CF(0) - the membrane proton channel. CF(1) has five subunits: alpha(3), beta(3), gamma(1), delta(1), epsilon(1). CF(0) has four main subunits: a(1), b(1), b'(1) and c(9-12).

The protein localises to the cellular thylakoid membrane. The enzyme catalyses ATP + H2O + 4 H(+)(in) = ADP + phosphate + 5 H(+)(out). In terms of biological role, produces ATP from ADP in the presence of a proton gradient across the membrane. The alpha chain is a regulatory subunit. The chain is ATP synthase subunit alpha from Synechococcus sp. (strain CC9902).